A 1358-amino-acid polypeptide reads, in one-letter code: DNA-directed RNA polymerase subunit beta (1358 aa).

It belongs to the RNA polymerase beta chain family. In terms of assembly, the RNAP catalytic core consists of 2 alpha, 1 beta, 1 beta' and 1 omega subunit. When a sigma factor is associated with the core the holoenzyme is formed, which can initiate transcription.

It carries out the reaction RNA(n) + a ribonucleoside 5'-triphosphate = RNA(n+1) + diphosphate. Functionally, DNA-dependent RNA polymerase catalyzes the transcription of DNA into RNA using the four ribonucleoside triphosphates as substrates. The sequence is that of DNA-directed RNA polymerase subunit beta from Francisella tularensis subsp. tularensis (strain FSC 198).